A 228-amino-acid chain; its full sequence is Ion-translocating oxidoreductase complex subunit G (228 aa).

The chain crosses the membrane as a helical span at residues alanine 35–leucine 55. Threonine 197 bears the FMN phosphoryl threonine mark.

It belongs to the RnfG family. As to quaternary structure, the complex is composed of six subunits: RnfA, RnfB, RnfC, RnfD, RnfE and RnfG. Requires FMN as cofactor.

Its subcellular location is the cell inner membrane. In terms of biological role, part of a membrane-bound complex that couples electron transfer with translocation of ions across the membrane. The protein is Ion-translocating oxidoreductase complex subunit G of Stutzerimonas stutzeri (Pseudomonas stutzeri).